The chain runs to 461 residues: MMEDTIAAISTPLGEGGIGIVRVSGPGAIEAVKNVFIPRQSKDLSKVPSFTLHYGKIVDPADGKIVDEVLVSVMRAPKSYTGEDVVEINCHGGIVAVEKVLELILKQGIRLAEPGEFTKRAFLNGRIDLSQAEAVIDIIRAKTEASLKLAGRQLSGELREKINAVRQKIINILAFIEVSIDYPEYEFDEVTPETALKNIDEIINDVRRLLSSYERGRILREGITAVIAGKPNVGKSSLLNALLRKKRAIVTDIPGTTRDVIEDYLNLKGIPVKIVDTAGIRETEDLVEKLGVEKTREYLNQADVTLFVVDVSIGIDEDDEKILSLINKDKSLLVINKIDLLQGKVNFEQYAVKTGIKNFVPFSARNFEGLEILENKLYEILIPEQEGEGESALISNLRHKNYLEKALNSLLSAKESIASGEPVDLVAIDLNEALRELGAITGDALGDEIINEIFSQFCVGK.

Residues arginine 22, glutamate 87, and arginine 126 each contribute to the (6S)-5-formyl-5,6,7,8-tetrahydrofolate site. The TrmE-type G domain maps to 222-382 (GITAVIAGKP…LENKLYEILI (161 aa)). K(+) is bound at residue asparagine 232. GTP is bound by residues 232-237 (NVGKSS), 251-257 (TDIPGTT), 276-279 (DTAG), and 363-365 (SAR). Mg(2+) is bound at residue serine 236. K(+) contacts are provided by threonine 251, isoleucine 253, and threonine 256. A Mg(2+)-binding site is contributed by threonine 257. Lysine 461 is a binding site for (6S)-5-formyl-5,6,7,8-tetrahydrofolate.

This sequence belongs to the TRAFAC class TrmE-Era-EngA-EngB-Septin-like GTPase superfamily. TrmE GTPase family. In terms of assembly, homodimer. Heterotetramer of two MnmE and two MnmG subunits. It depends on K(+) as a cofactor.

It localises to the cytoplasm. Exhibits a very high intrinsic GTPase hydrolysis rate. Involved in the addition of a carboxymethylaminomethyl (cmnm) group at the wobble position (U34) of certain tRNAs, forming tRNA-cmnm(5)s(2)U34. The chain is tRNA modification GTPase MnmE from Carboxydothermus hydrogenoformans (strain ATCC BAA-161 / DSM 6008 / Z-2901).